A 155-amino-acid chain; its full sequence is MKEDISKVVIYTDGACSGNPGPGGWGALLQFNEVNKEIFGHELETTNNRMEITAALEALKILKKPCHVEIYTDSKYLQQGITVWIHNWIKNNWCKSNNEPVKNADLWQNLYEELSKHTIIWKWVKGHASNSGNIAADKLAVQGRQTAIEILKCRG.

Positions 4–145 (DISKVVIYTD…ADKLAVQGRQ (142 aa)) constitute an RNase H type-1 domain. Aspartate 13, glutamate 51, aspartate 73, and aspartate 137 together coordinate Mg(2+).

The protein belongs to the RNase H family. In terms of assembly, monomer. Mg(2+) serves as cofactor.

It localises to the cytoplasm. The catalysed reaction is Endonucleolytic cleavage to 5'-phosphomonoester.. Endonuclease that specifically degrades the RNA of RNA-DNA hybrids. The sequence is that of Ribonuclease H from Rickettsia bellii (strain RML369-C).